Here is a 412-residue protein sequence, read N- to C-terminus: Serine hydroxymethyltransferase (412 aa).

Residues leucine 117 and glycine 121 to leucine 123 contribute to the (6S)-5,6,7,8-tetrahydrofolate site. At lysine 226 the chain carries N6-(pyridoxal phosphate)lysine. A (6S)-5,6,7,8-tetrahydrofolate-binding site is contributed by serine 349–phenylalanine 351.

It belongs to the SHMT family. As to quaternary structure, homodimer. Pyridoxal 5'-phosphate is required as a cofactor.

It localises to the cytoplasm. It catalyses the reaction (6R)-5,10-methylene-5,6,7,8-tetrahydrofolate + glycine + H2O = (6S)-5,6,7,8-tetrahydrofolate + L-serine. Its pathway is one-carbon metabolism; tetrahydrofolate interconversion. It participates in amino-acid biosynthesis; glycine biosynthesis; glycine from L-serine: step 1/1. In terms of biological role, catalyzes the reversible interconversion of serine and glycine with tetrahydrofolate (THF) serving as the one-carbon carrier. This reaction serves as the major source of one-carbon groups required for the biosynthesis of purines, thymidylate, methionine, and other important biomolecules. Also exhibits THF-independent aldolase activity toward beta-hydroxyamino acids, producing glycine and aldehydes, via a retro-aldol mechanism. In Oleidesulfovibrio alaskensis (strain ATCC BAA-1058 / DSM 17464 / G20) (Desulfovibrio alaskensis), this protein is Serine hydroxymethyltransferase.